A 107-amino-acid chain; its full sequence is uncharacterized protein (107 aa).

The protein belongs to the HesB/IscA family.

This is an uncharacterized protein from Azotobacter vinelandii.